Consider the following 456-residue polypeptide: Protein ESC2 (456 aa).

Residues M1 to D24 show a composition bias toward polar residues. A disordered region spans residues M1–G154. The segment covering E25–H43 has biased composition (acidic residues). The span at Q83 to V93 shows a compositional bias: polar residues. Phosphoserine occurs at positions 90, 125, and 126. The SUMO-like region 1 repeat unit spans residues E169–I287. Residues E301–T360 adopt a coiled-coil conformation. An SUMO-like region 2 repeat occupies M380–D456.

In terms of assembly, component of a cullin-RING ligase (CRL)-like complex composed of at least the cullin RTT101, a linker protein MMS1, and the potential substrate receptor ESC2. Interacts with RTT101 and MMS1. Interacts with SIR2.

Its subcellular location is the cytoplasm. The protein resides in the nucleus. Its function is as follows. May be a substrate targeting component of a cullin-RING-based E3 ubiquitin-protein ligase complex RTT101(MMS1-ESC2). Involved in HMR and telomere silencing via the recruitment or stabilizing of the SIR (silent information regulators) complex. In Saccharomyces cerevisiae (strain ATCC 204508 / S288c) (Baker's yeast), this protein is Protein ESC2 (ESC2).